A 98-amino-acid chain; its full sequence is Co-chaperonin GroES (98 aa).

It belongs to the GroES chaperonin family. Heptamer of 7 subunits arranged in a ring. Interacts with the chaperonin GroEL.

The protein localises to the cytoplasm. Its function is as follows. Together with the chaperonin GroEL, plays an essential role in assisting protein folding. The GroEL-GroES system forms a nano-cage that allows encapsulation of the non-native substrate proteins and provides a physical environment optimized to promote and accelerate protein folding. GroES binds to the apical surface of the GroEL ring, thereby capping the opening of the GroEL channel. The chain is Co-chaperonin GroES from Beutenbergia cavernae (strain ATCC BAA-8 / DSM 12333 / CCUG 43141 / JCM 11478 / NBRC 16432 / NCIMB 13614 / HKI 0122).